A 333-amino-acid polypeptide reads, in one-letter code: Tryptophan--tRNA ligase (333 aa).

ATP contacts are provided by residues 9–11 (QPT) and 17–18 (GN). Residues 10–18 (PTNNLTLGN) carry the 'HIGH' region motif. Aspartate 140 is a binding site for L-tryptophan. ATP contacts are provided by residues 152 to 154 (GQD), isoleucine 191, and 200 to 204 (KMSKS). A 'KMSKS' region motif is present at residues 200 to 204 (KMSKS).

This sequence belongs to the class-I aminoacyl-tRNA synthetase family. As to quaternary structure, homodimer.

It is found in the cytoplasm. The catalysed reaction is tRNA(Trp) + L-tryptophan + ATP = L-tryptophyl-tRNA(Trp) + AMP + diphosphate + H(+). In terms of biological role, catalyzes the attachment of tryptophan to tRNA(Trp). The chain is Tryptophan--tRNA ligase from Ureaplasma parvum serovar 3 (strain ATCC 700970).